The chain runs to 81 residues: Centromere protein X (81 aa).

M1 carries the N-acetylmethionine modification.

Belongs to the CENP-X/MHF2 family. In terms of assembly, heterodimer with CENPX, sometimes called MHF; this interaction stabilizes both partners. MHF heterodimers can assemble to form tetrameric structures. MHF also coassemble with CENPT-CENPW heterodimers at centromeres to form the tetrameric CENP-T-W-S-X complex. Forms a discrete complex with FANCM and CENPX, called FANCM-MHF; this interaction, probably mediated by direct binding between CENPS and FANCM, leads to synergistic activation of double-stranded DNA binding and strongly stimulates FANCM-mediated DNA remodeling. Recruited by FANCM to the Fanconi anemia (FA) core complex, which consists of CENPS, CENPX, FANCA, FANCB, FANCC, FANCE, FANCF, FANCG, FANCL, FANCM, FAAP24 and FAAP100. The FA core complex associates with Bloom syndrome (BLM) complex, which consists of at least BLM, DNA topoisomerase 3-alpha (TOP3A), RMI1/BLAP75, RPA1/RPA70 and RPA2/RPA32. The super complex between FA and BLM is called BRAFT.

Its subcellular location is the nucleus. The protein resides in the chromosome. It localises to the centromere. It is found in the kinetochore. DNA-binding component of the Fanconi anemia (FA) core complex. Required for the normal activation of the FA pathway, leading to monoubiquitination of the FANCI-FANCD2 complex in response to DNA damage, cellular resistance to DNA cross-linking drugs, and prevention of chromosomal breakage. In complex with CENPS (MHF heterodimer), crucial cofactor for FANCM in both binding and ATP-dependent remodeling of DNA. Stabilizes FANCM. In complex with CENPS and FANCM (but not other FANC proteins), rapidly recruited to blocked forks and promotes gene conversion at blocked replication forks. In complex with CENPS, CENPT and CENPW (CENP-T-W-S-X heterotetramer), involved in the formation of a functional kinetochore outer plate, which is essential for kinetochore-microtubule attachment and faithful mitotic progression. As a component of MHF and CENP-T-W-S-X complexes, binds DNA and bends it to form a nucleosome-like structure. DNA-binding function is fulfilled in the presence of CENPS, with the following preference for DNA substates: Holliday junction &gt; double-stranded &gt; splay arm &gt; single-stranded. Does not bind DNA on its own. The polypeptide is Centromere protein X (CENPX) (Homo sapiens (Human)).